The sequence spans 203 residues: ATP-dependent Clp protease proteolytic subunit (203 aa).

S107 (nucleophile) is an active-site residue. H132 is a catalytic residue.

Belongs to the peptidase S14 family. Fourteen ClpP subunits assemble into 2 heptameric rings which stack back to back to give a disk-like structure with a central cavity, resembling the structure of eukaryotic proteasomes.

It localises to the cytoplasm. It carries out the reaction Hydrolysis of proteins to small peptides in the presence of ATP and magnesium. alpha-casein is the usual test substrate. In the absence of ATP, only oligopeptides shorter than five residues are hydrolyzed (such as succinyl-Leu-Tyr-|-NHMec, and Leu-Tyr-Leu-|-Tyr-Trp, in which cleavage of the -Tyr-|-Leu- and -Tyr-|-Trp bonds also occurs).. Its function is as follows. Cleaves peptides in various proteins in a process that requires ATP hydrolysis. Has a chymotrypsin-like activity. Plays a major role in the degradation of misfolded proteins. In Pelagibacter ubique (strain HTCC1062), this protein is ATP-dependent Clp protease proteolytic subunit.